Reading from the N-terminus, the 96-residue chain is Myoglobin (96 aa).

The 96-residue stretch at 1 to 96 (GLSDGEWQLV…AKTKELGFLG (96 aa)) folds into the Globin domain. Phosphoserine is present on Ser-3. His-61 provides a ligand contact to nitrite. O2 is bound at residue His-61. Position 64 is a phosphothreonine (Thr-64).

This sequence belongs to the globin family. As to quaternary structure, monomeric.

The protein resides in the cytoplasm. Its subcellular location is the sarcoplasm. It catalyses the reaction Fe(III)-heme b-[protein] + nitric oxide + H2O = Fe(II)-heme b-[protein] + nitrite + 2 H(+). It carries out the reaction H2O2 + AH2 = A + 2 H2O. In terms of biological role, monomeric heme protein which primary function is to store oxygen and facilitate its diffusion within muscle tissues. Reversibly binds oxygen through a pentacoordinated heme iron and enables its timely and efficient release as needed during periods of heightened demand. Depending on the oxidative conditions of tissues and cells, and in addition to its ability to bind oxygen, it also has a nitrite reductase activity whereby it regulates the production of bioactive nitric oxide. Under stress conditions, like hypoxia and anoxia, it also protects cells against reactive oxygen species thanks to its pseudoperoxidase activity. This Ailuropoda melanoleuca (Giant panda) protein is Myoglobin (MB).